The chain runs to 206 residues: MFKDRPDRSDEVVLVGRSNVGKSTLMRAVTGHQVPTGQKPGVTRQPNHFDWASEDFMLTDLPGFGYMQGVEDGHEEAIKTEVVRYVESHADNIMVGVLVLDGKAAVDIIDRHSGGDEIPHVVELYYLLEELGVQPVVAVNKMDKVDDRDERLNDIADRLGLYPPWEQWQDVIAPITAKKDRIAALEDAVNSHFDAAKRDDLKQFFS.

The region spanning 8-195 is the EngB-type G domain; it reads RSDEVVLVGR…EDAVNSHFDA (188 aa). Residues 16–23, 41–45, 60–63, 140–143, and 175–177 contribute to the GTP site; these read GRSNVGKS, GVTRQ, DLPG, NKMD, and ITA. Residues S23 and T43 each coordinate Mg(2+).

This sequence belongs to the TRAFAC class TrmE-Era-EngA-EngB-Septin-like GTPase superfamily. EngB GTPase family. The cofactor is Mg(2+).

Functionally, necessary for normal cell division and for the maintenance of normal septation. The chain is Probable GTP-binding protein EngB from Halobacterium salinarum (strain ATCC 29341 / DSM 671 / R1).